A 160-amino-acid polypeptide reads, in one-letter code: CXXC motif containing zinc binding protein (160 aa).

Zn(2+) contacts are provided by C33, C36, C67, and C70. S75 is subject to Phosphoserine.

Belongs to the UPF0587 family. As to quaternary structure, monomer.

The sequence is that of CXXC motif containing zinc binding protein (CZIB) from Bos taurus (Bovine).